Consider the following 135-residue polypeptide: MAAAHLLRASRVWARWHPRALPVLRRPGGFSIREYAKKPVGKGGKGGVAAEALKDPEVCTDPTQLTTHAMGVNIYKEGQDVALKADSEYPTWLFQVNLGPPKKLEELEPESREYWRLLRKQNIWRHNRLSKNKKL.

A mitochondrion-targeting transit peptide spans 1-14 (MAAAHLLRASRVWA).

It belongs to the mitochondrion-specific ribosomal protein mL54 family. As to quaternary structure, component of the mitochondrial ribosome large subunit (39S) which comprises a 16S rRNA and about 50 distinct proteins.

The protein resides in the mitochondrion. The sequence is that of Large ribosomal subunit protein mL54 (Mrpl54) from Mus musculus (Mouse).